Consider the following 142-residue polypeptide: Potassium voltage-gated channel subfamily E regulatory beta subunit 5 (142 aa).

Asn2 and Asn25 each carry an N-linked (GlcNAc...) asparagine glycan. A helical transmembrane segment spans residues 61–81 (LYILLIMIFYACLAGGLILAY). The Cytoplasmic segment spans residues 82-142 (TRSRKLVEAK…PALAQGAERV (61 aa)). A disordered region spans residues 119 to 142 (SQAEGRRQLASEGLPALAQGAERV).

It belongs to the potassium channel KCNE family. As to quaternary structure, interacts with KCNQ1; impairs KCNQ1 localization in lipid rafts and only conducts current upon strong and continued depolarization. In terms of tissue distribution, highly expressed in heart, skeletal muscle, brain, spinal cord and placenta.

The protein localises to the membrane. Its function is as follows. Potassium channel ancillary subunit that is essential for generation of some native K(+) currents by virtue of formation of heteromeric ion channel complex with voltage-gated potassium (Kv) channel pore-forming alpha subunits. Functions as an inhibitory beta-subunit of the repolarizing cardiac potassium ion channel KCNQ1. The sequence is that of Potassium voltage-gated channel subfamily E regulatory beta subunit 5 (KCNE5) from Homo sapiens (Human).